The following is a 1174-amino-acid chain: DNA-directed RNA polymerase subunit beta' (1174 aa).

Residues cysteine 60, cysteine 62, cysteine 75, and cysteine 78 each contribute to the Zn(2+) site. Mg(2+) is bound by residues aspartate 450, aspartate 452, and aspartate 454. Zn(2+) is bound by residues cysteine 795, cysteine 869, cysteine 876, and cysteine 879.

The protein belongs to the RNA polymerase beta' chain family. As to quaternary structure, the RNAP catalytic core consists of 2 alpha, 1 beta, 1 beta' and 1 omega subunit. When a sigma factor is associated with the core the holoenzyme is formed, which can initiate transcription. It depends on Mg(2+) as a cofactor. Requires Zn(2+) as cofactor.

It carries out the reaction RNA(n) + a ribonucleoside 5'-triphosphate = RNA(n+1) + diphosphate. In terms of biological role, DNA-dependent RNA polymerase catalyzes the transcription of DNA into RNA using the four ribonucleoside triphosphates as substrates. This Clostridium kluyveri (strain ATCC 8527 / DSM 555 / NBRC 12016 / NCIMB 10680 / K1) protein is DNA-directed RNA polymerase subunit beta'.